The chain runs to 238 residues: Lipid transferase CIDEC (238 aa).

Residues 1–35 (MEYAMKSLSLLYPKSLSRHVSVRTSVVTQQLLSEP) are required for liquid-liquid phase separation (LLPS). The region spanning 41 to 118 (RARPCRVSTA…VLQKGQKWQP (78 aa)) is the CIDE-N domain.

This sequence belongs to the CIDE family. Homodimer. Homooligomer; undergoes liquid-liquid phase separation (LLPS) via its N-terminus, facilitating lipid droplet fusion, occurs at the lipid droplet contact sites. Interacts with CIDEA. Interacts with PLIN1. Interacts with NFAT5; this interaction is direct and retains NFAT5 in the cytoplasm. Interacts with CEBPB. Interacts with isoform CLSTN3beta of CLSTN3; inhibiting the lipid transferase activity of CIDEC. Ubiquitinated and targeted to proteasomal degradation, resulting in a short half-life (about 15 minutes in 3T3-L1 cells). Protein stability depends on triaclyglycerol synthesis, fatty acid availability and lipid droplet formation. Expressed mainly in adipose tissue, small intestine, heart, colon and stomach and, at lower levels, in brain, kidney and liver.

The protein resides in the lipid droplet. Its subcellular location is the endoplasmic reticulum. The protein localises to the nucleus. It carries out the reaction a triacyl-sn-glycerol(in) = a triacyl-sn-glycerol(out). Functionally, lipid transferase specifically expressed in white adipose tissue, which promotes unilocular lipid droplet formation by mediating lipid droplet fusion. Lipid droplet fusion promotes their enlargement, restricting lipolysis and favoring lipid storage. Localizes on the lipid droplet surface, at focal contact sites between lipid droplets, and mediates atypical lipid droplet fusion by undergoing liquid-liquid phase separation (LLPS) and promoting directional net neutral lipid transfer from the smaller to larger lipid droplets. The transfer direction may be driven by the internal pressure difference between the contacting lipid droplet pair. Its role in neutral lipid transfer and lipid droplet enlargement is activated by the interaction with PLIN1. May also act as a CEBPB coactivator in the white adipose tissue to control the expression of a subset of CEBPB downstream target genes, including SOCS1, SOCS3, TGFB1, TGFBR1, ID2 and XDH. When overexpressed in preadipocytes, induces apoptosis or increases cell susceptibility to apoptosis induced by serum deprivation or TGFB treatment. The chain is Lipid transferase CIDEC from Homo sapiens (Human).